Reading from the N-terminus, the 1734-residue chain is Gag-pol polyprotein (1734 aa).

Residue glycine 2 is the site of N-myristoyl glycine; by host attachment. Positions 109 to 112 match the PTAP/PSAP motif motif; it reads PTAP. The disordered stretch occupies residues 112–217; the sequence is PILPSGPSTQ…STTSRAFPLR (106 aa). An LYPX(n)L motif motif is present at residues 128-132; it reads LYPAF. The short motif at 161–164 is the PPXY motif element; that stretch reads PPPY. The residue at position 191 (serine 191) is a Phosphoserine; by host. The interaction with host PIAS4 stretch occupies residues 344–392; it reads GRSPTNLAKVKGITQGPNESPSAFLERLKEAYRRYTPYDPEDPGQETNV. Positions 429-434 are interaction with host UBE2I; sequence IFNKRE. Basic and acidic residues-rich tracts occupy residues 433-474 and 485-498; these read RETP…REMS and RQDR…RPQL. Disordered regions lie at residues 433-498 and 512-551; these read RETP…RPQL and WAKD…EPRI. Residues 501–518 form a CCHC-type zinc finger; sequence DQCAYCKEKGHWAKDCPK. The Peptidase A2 domain occupies 560–630; sequence VTFLVDTGAQ…CPYPLLGRDL (71 aa). The active-site Protease; shared with dimeric partner is the aspartate 565. Residues 740 to 931 enclose the Reverse transcriptase domain; the sequence is LDQGILVPCQ…KQVKYLGYLL (192 aa). The Mg(2+) site is built by aspartate 808, aspartate 882, aspartate 883, aspartate 1182, glutamate 1220, aspartate 1241, and aspartate 1311. The region spanning 1173-1319 is the RNase H type-1 domain; sequence PDADHTWYTD…ADQAAREAAI (147 aa). Residues 1386–1426 form an HHCC-type zinc finger; that stretch reads HRLTHLGYQKMKALLDRGESPYYMLNRDKTLQYVADSCTVC. Residues 1443 to 1601 enclose the Integrase catalytic domain; the sequence is RGHRPGTHWE…TPYEILYGAP (159 aa). Mg(2+) is bound by residues aspartate 1454 and aspartate 1513.

In terms of assembly, homohexamer; further associates as homomultimer. The virus core is composed of a lattice formed from hexagonal rings, each containing six capsid monomers. Interacts with mouse UBE2I and mouse PIAS4. Interacts (via PPXY motif) with host NEDD4. Interacts (via PSAP motif) with host TSG101. Interacts (via LYPX(n)L motif) with host PDCD6IP. As to quaternary structure, the reverse transcriptase is a monomer (Potential). Interacts (via RNase domains) with host release factor ETF1; this interaction is essential for translational readthrough of amber codon between viral gag and pol genes, as well as for viral replication. In terms of assembly, homodimer. Mg(2+) is required as a cofactor. In terms of processing, ubiquitinated by ITCH. Gag can recruit the ubiquitin ligase Itch in an L domain-independent manner to facilitate virus release via a mechanism that involves Gag ubiquitination. Specific enzymatic cleavages by the viral protease yield mature proteins. The protease is released by autocatalytic cleavage. The polyprotein is cleaved during and after budding, this process is termed maturation. Post-translationally, sumoylated; which is required for virus replication. In terms of processing, phosphorylated on serine residues.

The protein localises to the virion. The protein resides in the host cell membrane. It localises to the host late endosome membrane. It is found in the host endosome. Its subcellular location is the host multivesicular body. The protein localises to the host cytoplasm. The catalysed reaction is DNA(n) + a 2'-deoxyribonucleoside 5'-triphosphate = DNA(n+1) + diphosphate. The enzyme catalyses Endonucleolytic cleavage to 5'-phosphomonoester.. Its activity is regulated as follows. Most efficiently inhibited by Amprenavir, which is able to block Gag-Pol processing in infected cells. In terms of biological role, plays a role in budding and is processed by the viral protease during virion maturation outside the cell. During budding, it recruits, in a PPXY-dependent or independent manner, Nedd4-like ubiquitin ligases that conjugate ubiquitin molecules to Gag-Pol, or to Gag-Pol binding host factors. Interaction with HECT ubiquitin ligases probably links the viral protein to the host ESCRT pathway and facilitates release. Targets Gag and gag-pol polyproteins to the plasma membrane via a multipartite membrane binding signal, that includes its myristoylated N-terminus. Also mediates nuclear localization of the pre-integration complex. Its function is as follows. Constituent of the pre-integration complex (PIC) which tethers the latter to mitotic chromosomes. This allows the integration of the viral genome into the host DNA. Functionally, forms the spherical core of the virion that encapsulates the genomic RNA-nucleocapsid complex. In terms of biological role, involved in the packaging and encapsidation of two copies of the genome. Binds with high affinity to conserved UCUG elements within the packaging signal, located near the 5'-end of the genome. This binding is dependent on genome dimerization. Acts as a nucleic acid chaperone which is involved in rearrangement of nucleic acid secondary structures during gRNA retrotranscription. The aspartyl protease mediates proteolytic cleavages of Gag and Gag-Pol polyproteins during or shortly after the release of the virion from the plasma membrane. Cleavages take place as an ordered, step-wise cascade to yield mature proteins. This process is called maturation. Displays maximal activity during the budding process just prior to particle release from the cell (Potential). Cleaves the translation initiation factor eIF4G leading to the inhibition of host cap-dependent translation. Its function is as follows. RT is a multifunctional enzyme that converts the viral dimeric RNA genome into dsDNA in the cytoplasm, shortly after virus entry into the cell. This enzyme displays a DNA polymerase activity that can copy either DNA or RNA templates, and a ribonuclease H (RNase H) activity that cleaves the RNA strand of RNA-DNA heteroduplexes in a partially processive 3' to 5' endonucleasic mode. Conversion of viral genomic RNA into dsDNA requires many steps. A tRNA binds to the primer-binding site (PBS) situated at the 5' end of the viral RNA. RT uses the 3' end of the tRNA primer to perform a short round of RNA-dependent minus-strand DNA synthesis. The reading proceeds through the U5 region and ends after the repeated (R) region which is present at both ends of viral RNA. The portion of the RNA-DNA heteroduplex is digested by the RNase H, resulting in a ssDNA product attached to the tRNA primer. This ssDNA/tRNA hybridizes with the identical R region situated at the 3' end of viral RNA. This template exchange, known as minus-strand DNA strong stop transfer, can be either intra- or intermolecular. RT uses the 3' end of this newly synthesized short ssDNA to perform the RNA-dependent minus-strand DNA synthesis of the whole template. RNase H digests the RNA template except for a polypurine tract (PPT) situated at the 5' end of the genome. It is not clear if both polymerase and RNase H activities are simultaneous. RNase H probably can proceed both in a polymerase-dependent (RNA cut into small fragments by the same RT performing DNA synthesis) and a polymerase-independent mode (cleavage of remaining RNA fragments by free RTs). Secondly, RT performs DNA-directed plus-strand DNA synthesis using the PPT that has not been removed by RNase H as primers. PPT and tRNA primers are then removed by RNase H. The 3' and 5' ssDNA PBS regions hybridize to form a circular dsDNA intermediate. Strand displacement synthesis by RT to the PBS and PPT ends produces a blunt ended, linear dsDNA copy of the viral genome that includes long terminal repeats (LTRs) at both ends. Functionally, catalyzes viral DNA integration into the host chromosome, by performing a series of DNA cutting and joining reactions. This enzyme activity takes place after virion entry into a cell and reverse transcription of the RNA genome in dsDNA. The first step in the integration process is 3' processing. This step requires a complex comprising the viral genome, matrix protein and integrase. This complex is called the pre-integration complex (PIC). The integrase protein removes 2 nucleotides from each 3' end of the viral DNA, leaving recessed CA OH's at the 3' ends. In the second step that requires cell division, the PIC enters cell nucleus. In the third step, termed strand transfer, the integrase protein joins the previously processed 3' ends to the 5' ends of strands of target cellular DNA at the site of integration. The last step is viral DNA integration into host chromosome. The protein is Gag-pol polyprotein (gag-pol) of Mus musculus (Mouse).